The following is a 284-amino-acid chain: Bifunctional protein FolD (284 aa).

Residues 165 to 167, Ser190, and Val231 contribute to the NADP(+) site; that span reads GRS.

It belongs to the tetrahydrofolate dehydrogenase/cyclohydrolase family. As to quaternary structure, homodimer.

The catalysed reaction is (6R)-5,10-methylene-5,6,7,8-tetrahydrofolate + NADP(+) = (6R)-5,10-methenyltetrahydrofolate + NADPH. It catalyses the reaction (6R)-5,10-methenyltetrahydrofolate + H2O = (6R)-10-formyltetrahydrofolate + H(+). It participates in one-carbon metabolism; tetrahydrofolate interconversion. Its function is as follows. Catalyzes the oxidation of 5,10-methylenetetrahydrofolate to 5,10-methenyltetrahydrofolate and then the hydrolysis of 5,10-methenyltetrahydrofolate to 10-formyltetrahydrofolate. The protein is Bifunctional protein FolD of Natranaerobius thermophilus (strain ATCC BAA-1301 / DSM 18059 / JW/NM-WN-LF).